The sequence spans 949 residues: Leucine--tRNA ligase (949 aa).

The short motif at 68-79 (PYPSGEGLHVGH) is the 'HIGH' region element. Positions 540 to 562 (VPDYSPVSFDPDDAGSEPSPPLG) are disordered. Residues 722 to 726 (KIGKS) carry the 'KMSKS' region motif. Lys-725 contacts ATP.

The protein belongs to the class-I aminoacyl-tRNA synthetase family.

It localises to the cytoplasm. The enzyme catalyses tRNA(Leu) + L-leucine + ATP = L-leucyl-tRNA(Leu) + AMP + diphosphate. The protein is Leucine--tRNA ligase of Mycolicibacterium gilvum (strain PYR-GCK) (Mycobacterium gilvum (strain PYR-GCK)).